A 505-amino-acid chain; its full sequence is MAMFYAHAFGGYDENLHAFPGISSTVANDVRKYSVVSVYNNKYDIVKDKYMWCYSYVNKRYIGALLPMFECNEYLQIGDPIHDLEGNQISIVTYRHKNYYALSGIGYESLDLCLEGVGIHHHTLEAGNAVYGKVQHDYSTIKEKAKEMNSLSPGPIIDYHVWIGDCVCQVTAVDVHGKEIMRMRFKKGAVLPIPNLVKVKLGEENDTVNLSTSISALLNSGGGTIEVTSKEERVDYVLMKRLESIRHLWSVVYDHFDVVNGKERCYVHMHSSNQSPMLSTVKTNLYMKTMGACLQMDYMEALEYLSELKESGGRSPRPELPEFEYPDGVEDAGSIERLAEEFFSRSELQADEPVNFCNSINVKHTSVSAKQLRTRIRQQLPSILSSFANTDGGYLFIGVDNNTHKVVGFTVGQDYLKLVESDIEKYIKRLRVVHFCEKKEDIKYACRFIKVYKPGEETTSTYVCAIKVERCCCAVFADWPESWYMDTSGSMKKYSPDEWVSHIKF.

The segment at 1-238 (MAMFYAHAFG…SKEERVDYVL (238 aa)) is poxin-like. The Proton donor role is filled by His-17. The active-site Shared with catalytic histidine of dimeric partner is Tyr-138. Lys-142 serves as the catalytic Proton acceptor; shared with catalytic histidine of dimeric partner. The segment at 239–505 (MKRLESIRHL…PDEWVSHIKF (267 aa)) is schlafen-like.

It in the N-terminal section; belongs to the poxin family. In the C-terminal section; belongs to the Schlafen protein family. Subgroup poxviridae B3 subfamily. Homodimer.

It catalyses the reaction 2',3'-cGAMP + H2O = Gp(2'-5')Ap(3') + H(+). Nuclease that is responsible for viral evasion of host cGAS-STING innate immunity. Cleaves 2',3'-cGAMP which is produced by host cGAS following recognition of cytosolic DNA and blocks the subsequent 2',3'-cGAMP-mediated activation of TMEM173/STING, which normally spreads to adjacent cells and activates the interferon and NF-kappa-B immune responses. This is Poxin-Schlafen (OPG188) from Bos taurus (Bovine).